The sequence spans 577 residues: Arginine--tRNA ligase (577 aa).

The 'HIGH' region motif lies at 122–132 (PNVAKEMHVGH).

This sequence belongs to the class-I aminoacyl-tRNA synthetase family. As to quaternary structure, monomer.

Its subcellular location is the cytoplasm. The catalysed reaction is tRNA(Arg) + L-arginine + ATP = L-arginyl-tRNA(Arg) + AMP + diphosphate. The chain is Arginine--tRNA ligase from Salmonella arizonae (strain ATCC BAA-731 / CDC346-86 / RSK2980).